Here is a 56-residue protein sequence, read N- to C-terminus: Large ribosomal subunit protein bL32 (56 aa).

The disordered stretch occupies residues 1-23 (MAVQQNKSTRSKRGMRRSHNALP). Basic residues predominate over residues 9–19 (TRSKRGMRRSH).

It belongs to the bacterial ribosomal protein bL32 family.

The polypeptide is Large ribosomal subunit protein bL32 (Blochmanniella floridana).